Reading from the N-terminus, the 303-residue chain is Heme A synthase (303 aa).

Over 1–8 (MFGKKNLK) the chain is Cytoplasmic. A helical transmembrane segment spans residues 9–29 (WLGVVATLMMTFVQLGGALVT). Residues 30–67 (KTGSADGCGSSWPLCHGALIPEFFPIDTIIELSHRAVS) are Extracellular-facing. Cys37 and Cys44 are disulfide-bonded. Glu60 is an active-site residue. Residue His63 coordinates heme o. Residues 68–88 (ALSLLMVLWLVITAWKHIGYI) traverse the membrane as a helical segment. At 89 to 93 (KEIKP) the chain is on the cytoplasmic side. Residues 94–114 (LSIISVGFLLLQALIGAAAVI) traverse the membrane as a helical segment. At 115–125 (WQQNDYVLALH) the chain is on the extracellular side. A heme o-binding site is contributed by His125. The chain crosses the membrane as a helical span at residues 126–146 (FGISLISFSSVFLITLIIFSI). At 147–163 (DQKYEADELYIKKPLRR) the chain is on the cytoplasmic side. A helical transmembrane segment spans residues 164-184 (LTWLMAIIIYCGVYTGALVRH). At 185–215 (ADASLAYGGWPLPFHDLVPHSEQDWVQLTHR) the chain is on the extracellular side. His214 is a heme b binding site. The helical transmembrane segment at 216 to 236 (IMAFIVFTIIMITYIHAVKNY) threads the bilayer. Residues 237–244 (PNNRTVHY) are Cytoplasmic-facing. The chain crosses the membrane as a helical span at residues 245–265 (GYTAAFILVILQVITGALSIM). At 266 to 270 (TNVNL) the chain is on the extracellular side. A helical membrane pass occupies residues 271–291 (IIALFHALFITYLFGMTTYFI). His276 serves as a coordination point for heme b. Topologically, residues 292–303 (MLMLRSVRSDKQ) are cytoplasmic.

The protein belongs to the COX15/CtaA family. Type 1 subfamily. As to quaternary structure, interacts with CtaB. Requires heme b as cofactor.

The protein localises to the cell membrane. It carries out the reaction Fe(II)-heme o + 2 A + H2O = Fe(II)-heme a + 2 AH2. It functions in the pathway porphyrin-containing compound metabolism; heme A biosynthesis; heme A from heme O: step 1/1. Functionally, catalyzes the conversion of heme O to heme A by two successive hydroxylations of the methyl group at C8. The first hydroxylation forms heme I, the second hydroxylation results in an unstable dihydroxymethyl group, which spontaneously dehydrates, resulting in the formyl group of heme A. The sequence is that of Heme A synthase from Staphylococcus aureus (strain Mu3 / ATCC 700698).